A 220-amino-acid polypeptide reads, in one-letter code: Splicing factor U2AF 26 kDa subunit (220 aa).

N-acetylalanine is present on alanine 2. The C3H1-type 1 zinc finger occupies 12 to 40 (EKDKVNCSFYFKIGVCRHGDRCSRLHNKP). The 83-residue stretch at 65–147 (SHCHVSDVEV…QAVHGELSPV (83 aa)) folds into the RRM domain. The C3H1-type 2 zinc-finger motif lies at 149 to 176 (DFRESCCRQYEMGECTRGGFCNFMHLRP). The interval 185–220 (LYGRGPRRRSPPRFHTGHHPRERNHRCSPDHWHGRF) is disordered. The segment covering 189 to 208 (GPRRRSPPRFHTGHHPRERN) has biased composition (basic residues). The span at 209–220 (HRCSPDHWHGRF) shows a compositional bias: basic and acidic residues.

It belongs to the splicing factor SR family. Interacts with GFI1, U2AF2 and C1QBP. In terms of tissue distribution, isoform 2 is widely expressed. Isoform 3 is highly expressed in heart, brain and lung, lower expressed in thymus and much lower expressed in peripheral blood leukocytes.

The protein resides in the nucleus. It is found in the nucleus speckle. The protein localises to the cytoplasm. Functionally, RNA-binding protein that function as a pre-mRNA splicing factor. Plays a critical role in both constitutive and enhancer-dependent splicing by mediating protein-protein interactions and protein-RNA interactions required for accurate 3'-splice site selection. Acts by enhancing the binding of U2AF2 to weak pyrimidine tracts. Also participates in the regulation of alternative pre-mRNA splicing. Activates exon 5 skipping of PTPRC during T-cell activation; an event reversed by GFI1. Binds to RNA at the AG dinucleotide at the 3'-splice site. Shows a preference for AGC or AGA. This is Splicing factor U2AF 26 kDa subunit (U2AF1L4) from Homo sapiens (Human).